The sequence spans 1024 residues: Beta-galactosidase (1024 aa).

Residues N103 and D202 each coordinate substrate. Position 202 (D202) interacts with Na(+). Residues E417, H419, and E462 each contribute to the Mg(2+) site. Substrate is bound by residues E462 and 538-541 (EYAH). E462 acts as the Proton donor in catalysis. The active-site Nucleophile is E538. N598 contributes to the Mg(2+) binding site. Na(+)-binding residues include F602 and N605. Substrate is bound by residues N605 and W1000.

The protein belongs to the glycosyl hydrolase 2 family. In terms of assembly, homotetramer. It depends on Mg(2+) as a cofactor. Na(+) serves as cofactor.

It carries out the reaction Hydrolysis of terminal non-reducing beta-D-galactose residues in beta-D-galactosides.. In Escherichia coli O6:K15:H31 (strain 536 / UPEC), this protein is Beta-galactosidase.